A 332-amino-acid chain; its full sequence is Glyceraldehyde-3-phosphate dehydrogenase 2 (332 aa).

NAD(+)-binding positions include 11–12 (RI), Asp32, and Arg77. D-glyceraldehyde 3-phosphate is bound by residues 148-150 (SCT), Thr179, 208-209 (TG), and Arg231. The active-site Nucleophile is Cys149. Position 273 is a phosphotyrosine (Tyr273). The residue at position 274 (Thr274) is a Phosphothreonine. Residue Asn313 coordinates NAD(+).

Belongs to the glyceraldehyde-3-phosphate dehydrogenase family. As to quaternary structure, homotetramer.

The protein localises to the cytoplasm. The catalysed reaction is D-glyceraldehyde 3-phosphate + phosphate + NAD(+) = (2R)-3-phospho-glyceroyl phosphate + NADH + H(+). The protein operates within carbohydrate degradation; glycolysis; pyruvate from D-glyceraldehyde 3-phosphate: step 1/5. The chain is Glyceraldehyde-3-phosphate dehydrogenase 2 (Gapdh2) from Drosophila melanogaster (Fruit fly).